A 351-amino-acid chain; its full sequence is Photosystem II D2 protein (351 aa).

The chain crosses the membrane as a helical span at residues 39-59 (CSYLALGGWLTGTTFVTSWYT). Histidine 116 provides a ligand contact to chlorophyll a. A helical membrane pass occupies residues 123–139 (GFCLRQFEIARLVGIRP). The pheophytin a site is built by glutamine 128 and asparagine 141. Residues 151–164 (VFVSVFLMYPLGQA) form a helical membrane-spanning segment. Residue histidine 196 coordinates chlorophyll a. Residues 206–226 (GALLCAIHGATVQNTLFEDGD) form a helical membrane-spanning segment. Histidine 213 and phenylalanine 260 together coordinate a plastoquinone. Histidine 213 serves as a coordination point for Fe cation. Histidine 267 is a binding site for Fe cation. Residues 277–293 (GLWTSAFGIVGLALNLR) traverse the membrane as a helical segment.

This sequence belongs to the reaction center PufL/M/PsbA/D family. PSII is composed of 1 copy each of membrane proteins PsbA, PsbB, PsbC, PsbD, PsbE, PsbF, PsbH, PsbI, PsbJ, PsbK, PsbL, PsbM, PsbT, PsbX, PsbY, PsbZ, Psb30/Ycf12, at least 3 peripheral proteins of the oxygen-evolving complex and a large number of cofactors. It forms dimeric complexes. Requires The D1/D2 heterodimer binds P680, chlorophylls that are the primary electron donor of PSII, and subsequent electron acceptors. It shares a non-heme iron and each subunit binds pheophytin, quinone, additional chlorophylls, carotenoids and lipids. There is also a Cl(-1) ion associated with D1 and D2, which is required for oxygen evolution. The PSII complex binds additional chlorophylls, carotenoids and specific lipids. as cofactor.

It localises to the plastid. Its subcellular location is the chloroplast thylakoid membrane. The catalysed reaction is 2 a plastoquinone + 4 hnu + 2 H2O = 2 a plastoquinol + O2. Functionally, photosystem II (PSII) is a light-driven water:plastoquinone oxidoreductase that uses light energy to abstract electrons from H(2)O, generating O(2) and a proton gradient subsequently used for ATP formation. It consists of a core antenna complex that captures photons, and an electron transfer chain that converts photonic excitation into a charge separation. The D1/D2 (PsbA/PsbD) reaction center heterodimer binds P680, the primary electron donor of PSII as well as several subsequent electron acceptors. D2 is needed for assembly of a stable PSII complex. The chain is Photosystem II D2 protein from Gracilaria tenuistipitata var. liui (Red alga).